A 198-amino-acid polypeptide reads, in one-letter code: Cyclin-dependent kinase inhibitor 1B (198 aa).

The span at 1-12 (MSNVRVSNGSPT) shows a compositional bias: polar residues. A disordered region spans residues 1 to 30 (MSNVRVSNGSPTSERRDAKQAEYPKPSACR). Ser-10 carries the phosphoserine; by UHMK1 modification. Basic and acidic residues predominate over residues 13 to 22 (SERRDAKQAE). An interaction with CDK2 region spans residues 51–91 (DMEEASQNKWNFDFQNHKPLEGKYEWQEVEKGSLPEFYYRP). Tyr-74 bears the Phosphotyrosine; by SRC mark. The tract at residues 87 to 198 (FYYRPPRPPK…KKPGLRRRQT (112 aa)) is disordered. A Phosphotyrosine; by ABL, LYN and SRC modification is found at Tyr-88. At Tyr-89 the chain carries Phosphotyrosine. Over residues 104-113 (QESQDVSGTR) the composition is skewed to polar residues. Basic and acidic residues predominate over residues 126–137 (EDTHLVDQKTDA). A Nuclear localization signal motif is present at residues 153–169 (KRPATDDSSPQNKRANR). Thr-157 carries the phosphothreonine; by CaMK1, PKB/AKT1 and PIM1 modification. Thr-170 is modified (phosphothreonine). The span at 175–186 (SDGSPNAGSVEQ) shows a compositional bias: polar residues. Position 187 is a phosphothreonine; by PKB/AKT1, CDK1 and CDK2 (Thr-187). Thr-198 carries the phosphothreonine; by CaMK1, PKB/AKT1, RPS6KA1, RPS6KA3 and PIM1 modification.

It belongs to the CDI family. In terms of assembly, forms a ternary complex composed of CCNE1, CDK2 and CDKN1B. Interacts directly with CCNE1; the interaction is inhibited by CDK2-dependent phosphorylation on Thr-187. Interacts with COPS5, subunit of the COP9 signalosome complex; the interaction leads to CDKN1B degradation. Interacts with NUP50; the interaction leads to nuclear import and degradation of phosphorylated CDKN1B. Interacts with CCND1 and SNX6. Interacts (Thr-198-phosphorylated form) with 14-3-3 proteins, binds strongly YWHAQ, weakly YWHAE and YWHAH, but not YWHAB nor YWHAZ; the interaction with YWHAQ results in translocation to the cytoplasm. Interacts with AKT1 and LYN; the interactions lead to cytoplasmic mislocation, phosphorylation of CDKN1B and inhibition of cell cycle arrest. Forms a ternary complex with CCNA2 and CDK2; CDKN1B inhibits the kinase activity of CDK2 through conformational rearrangements. Interacts (unphosphorylated form) with CDK2. Forms a complex with CDK2 and SPDYA, but does not directly interact with SPDYA. Forms a ternary complex composed of cyclin D, CDK4 and CDKN1B. Interacts (phosphorylated on Tyr-88 and Tyr-89) with CDK4; the interaction is required for cyclin D and CDK4 complex assembly, induces nuclear translocation and activates the CDK4 kinase activity. Interacts with GRB2. Interacts with PIM1. Identified in a complex with SKP1, SKP2 and CKS1B. Interacts with UHMK1; the interaction leads to cytoplasmic mislocation, phosphorylation of CDKN1B and inhibition of cell cycle arrest. Also interacts with CDK1. Dephosphorylated on Thr-187 by PPM1H, leading to CDKN1B stability. In terms of processing, phosphorylated; phosphorylation occurs on serine, threonine and tyrosine residues. Phosphorylation on Ser-10 is the major site of phosphorylation in resting cells, takes place at the G(0)-G(1) phase and leads to protein stability. Phosphorylation on other sites is greatly enhanced by mitogens, growth factors, cMYC and in certain cancer cell lines. The phosphorylated form found in the cytoplasm is inactivate. Phosphorylation on Thr-198 is required for interaction with 14-3-3 proteins. Phosphorylation on Thr-187, by CDK1 and CDK2 leads to protein ubiquitination and proteasomal degradation. Tyrosine phosphorylation promotes this process. Phosphorylation by PKB/AKT1 can be suppressed by LY294002, an inhibitor of the catalytic subunit of PI3K. Phosphorylation on Tyr-88 and Tyr-89 has no effect on binding CDK2, but is required for binding CDK4. Dephosphorylated on tyrosine residues by G-CSF. Dephosphorylated on Thr-187 by PPM1H, leading to CDKN1B stability. Post-translationally, ubiquitinated; in the cytoplasm by the KPC complex (composed of RNF123/KPC1 and UBAC1/KPC2) and, in the nucleus, by SCF(SKP2). The latter requires prior phosphorylation on Thr-187. Ubiquitinated; by a TRIM21-containing SCF(SKP2)-like complex; leads to its degradation. Subject to degradation in the lysosome. Interaction with SNX6 promotes lysosomal degradation.

It localises to the nucleus. The protein resides in the cytoplasm. The protein localises to the endosome. Important regulator of cell cycle progression. Inhibits the kinase activity of CDK2 bound to cyclin A, but has little inhibitory activity on CDK2 bound to SPDYA. Involved in G1 arrest. Potent inhibitor of cyclin E- and cyclin A-CDK2 complexes. Forms a complex with cyclin type D-CDK4 complexes and is involved in the assembly, stability, and modulation of CCND1-CDK4 complex activation. Acts either as an inhibitor or an activator of cyclin type D-CDK4 complexes depending on its phosphorylation state and/or stoichometry. The chain is Cyclin-dependent kinase inhibitor 1B (CDKN1B) from Canis lupus familiaris (Dog).